A 164-amino-acid polypeptide reads, in one-letter code: Large ribosomal subunit protein eL21x/eL21w (164 aa).

It belongs to the eukaryotic ribosomal protein eL21 family.

In Arabidopsis thaliana (Mouse-ear cress), this protein is Large ribosomal subunit protein eL21x/eL21w (RPL21E).